The chain runs to 156 residues: MNRIEAHLLATDLKFAIISTRWNHLIVDRLVEGAELAFVQHGGRSENLDHYLSPGAYEVPLIARKLAESGRYDAIVCLGAVIKGDTDHYDFVAGGAANGILNTSLHTGVPVAFGVLTTDTVEQALNRAGIKAGNKGAEATLAMIETVNLLRQIPQS.

5-amino-6-(D-ribitylamino)uracil contacts are provided by residues W22, 56-58, and 80-82; these read AYE and AVI. A (2S)-2-hydroxy-3-oxobutyl phosphate-binding site is contributed by 85–86; sequence DT. Catalysis depends on H88, which acts as the Proton donor. F113 serves as a coordination point for 5-amino-6-(D-ribitylamino)uracil. R127 provides a ligand contact to (2S)-2-hydroxy-3-oxobutyl phosphate.

Belongs to the DMRL synthase family.

It catalyses the reaction (2S)-2-hydroxy-3-oxobutyl phosphate + 5-amino-6-(D-ribitylamino)uracil = 6,7-dimethyl-8-(1-D-ribityl)lumazine + phosphate + 2 H2O + H(+). The protein operates within cofactor biosynthesis; riboflavin biosynthesis; riboflavin from 2-hydroxy-3-oxobutyl phosphate and 5-amino-6-(D-ribitylamino)uracil: step 1/2. Catalyzes the formation of 6,7-dimethyl-8-ribityllumazine by condensation of 5-amino-6-(D-ribitylamino)uracil with 3,4-dihydroxy-2-butanone 4-phosphate. This is the penultimate step in the biosynthesis of riboflavin. The polypeptide is 6,7-dimethyl-8-ribityllumazine synthase (Deinococcus deserti (strain DSM 17065 / CIP 109153 / LMG 22923 / VCD115)).